A 35-amino-acid chain; its full sequence is Phospholipase A2 neuwieditoxin-1 (35 aa).

Positions 27, 29, and 31 each coordinate Ca(2+).

This sequence belongs to the phospholipase A2 family. Group II subfamily. D49 sub-subfamily. Dimer. Requires Ca(2+) as cofactor. Expressed by the venom gland.

Its subcellular location is the secreted. The catalysed reaction is a 1,2-diacyl-sn-glycero-3-phosphocholine + H2O = a 1-acyl-sn-glycero-3-phosphocholine + a fatty acid + H(+). Its function is as follows. Snake venom phospholipase A2 (PLA2) that shows presynaptic neurotoxicity. 10 ug/ml of this protein produce complete neuromuscular blockade up to 80 minutes, without inhibiting the responses to acetylcholine (ACh) and potassium chloride (KCl). In addition, it produces a calcium-dependent blockade of acetylcholine release and causes appearance of giant miniature end-plate potentials. PLA2 catalyzes the calcium-dependent hydrolysis of the 2-acyl groups in 3-sn-phosphoglycerides. The chain is Phospholipase A2 neuwieditoxin-1 from Bothrops pauloensis (Neuwied's lancehead).